The chain runs to 225 residues: U2 small nuclear ribonucleoprotein B'' (225 aa).

Positions 7-86 (HTIYINNMND…KPMRIQYAKT (80 aa)) constitute an RRM 1 domain. Positions 99–145 (ADKEKKKEKKKAKTVEQTATTTNKKPGQGTPNSANTQGNSTPNPQVP) are disordered. Lys-111 is subject to N6-acetyllysine; alternate. Lys-111 participates in a covalent cross-link: Glycyl lysine isopeptide (Lys-Gly) (interchain with G-Cter in SUMO2); alternate. Low complexity predominate over residues 113 to 123 (VEQTATTTNKK). Polar residues predominate over residues 127–141 (GTPNSANTQGNSTPN). Residue Tyr-151 is modified to Phosphotyrosine. One can recognise an RRM 2 domain in the interval 151 to 225 (YILFLNNLPE…HAMKITYAKK (75 aa)).

It belongs to the RRM U1 A/B'' family. As to quaternary structure, identified in the spliceosome B complex. Identified in the spliceosome C complex. Present in a spliceosome complex assembled in vitro, and composed of SNRPB2, HPRP8BP and CRNKL1. Contributes to the binding of stem loop IV of U2 snRNA with SNRPP1.

The protein resides in the nucleus. In terms of biological role, involved in pre-mRNA splicing as component of the spliceosome. Associated with sn-RNP U2, where it contributes to the binding of stem loop IV of U2 snRNA. The polypeptide is U2 small nuclear ribonucleoprotein B'' (SNRPB2) (Homo sapiens (Human)).